We begin with the raw amino-acid sequence, 300 residues long: MKKNKIVFIFGPTAVGKSDILFNFPKGIAEVINVDSIQVYKEFDIASCKPSVELRSHIKHHLVDFLEPIEEYNLGVFYKEASKIIKNLRDQDKLPVFVGGSAFYFKHLQYGLPSTPPVSSEIRFYVNSLFTTRGKDYLLEELKRVDFERYESISENDIYRIRRSLEVYYQTGIPISQFLKKGQMIEDVLAIGLKRPMEEMRSRIISRVGNMIDCGLLEEIKSLLGKGYDETTPAFKGIGYREFLLWKSRPYSMLNDIIDLIVKNSFLYVKRQMTFFDKIPNVLWFHPDDDLRDILDLIFV.

An ATP-binding site is contributed by G11–S18. Residue T13–S18 participates in substrate binding. The tract at residues D35–Q38 is interaction with substrate tRNA.

This sequence belongs to the IPP transferase family. Monomer. It depends on Mg(2+) as a cofactor.

It catalyses the reaction adenosine(37) in tRNA + dimethylallyl diphosphate = N(6)-dimethylallyladenosine(37) in tRNA + diphosphate. In terms of biological role, catalyzes the transfer of a dimethylallyl group onto the adenine at position 37 in tRNAs that read codons beginning with uridine, leading to the formation of N6-(dimethylallyl)adenosine (i(6)A). In Borrelia turicatae (strain 91E135), this protein is tRNA dimethylallyltransferase.